The sequence spans 88 residues: Small ribosomal subunit protein uS15c (88 aa).

It belongs to the universal ribosomal protein uS15 family. Part of the 30S ribosomal subunit.

It localises to the plastid. The protein localises to the chloroplast. This chain is Small ribosomal subunit protein uS15c (rps15), found in Pinus koraiensis (Korean pine).